The chain runs to 450 residues: IMP-specific 5'-nucleotidase 1 (450 aa).

Residue histidine 144 coordinates ATP. The active-site Nucleophile is aspartate 172. Aspartate 172, aspartate 174, aspartate 180, threonine 208, aspartate 376, and lysine 384 together coordinate IMP. Mg(2+) is bound by residues aspartate 172 and aspartate 174. Aspartate 174 acts as the Proton donor in catalysis. Aspartate 411 lines the Mg(2+) pocket.

The protein belongs to the ISN1 family. As to quaternary structure, homotetramer. The cofactor is Mg(2+).

The enzyme catalyses IMP + H2O = inosine + phosphate. Allosterically activated by ATP. ATP binding is a prerequisite to magnesium and substrate binding. ATP binds to 2 of the subunits in the homotetramer inducing a closure of these 2 subunits and the release of the C-terminal loop, thereby activating the enzyme. Functionally, IMP-specific 5'-nucleotidase involved in IMP (inosine 5'-phosphate) degradation. This is IMP-specific 5'-nucleotidase 1 (ISN1) from Saccharomyces cerevisiae (strain ATCC 204508 / S288c) (Baker's yeast).